The sequence spans 314 residues: Lipoyl synthase (314 aa).

Residues cysteine 55, cysteine 60, cysteine 66, cysteine 81, cysteine 85, cysteine 88, and serine 292 each coordinate [4Fe-4S] cluster. Positions 67 to 281 (WEDREATFLI…SAYAEGLGFA (215 aa)) constitute a Radical SAM core domain.

This sequence belongs to the radical SAM superfamily. Lipoyl synthase family. [4Fe-4S] cluster serves as cofactor.

The protein resides in the cytoplasm. It carries out the reaction [[Fe-S] cluster scaffold protein carrying a second [4Fe-4S](2+) cluster] + N(6)-octanoyl-L-lysyl-[protein] + 2 oxidized [2Fe-2S]-[ferredoxin] + 2 S-adenosyl-L-methionine + 4 H(+) = [[Fe-S] cluster scaffold protein] + N(6)-[(R)-dihydrolipoyl]-L-lysyl-[protein] + 4 Fe(3+) + 2 hydrogen sulfide + 2 5'-deoxyadenosine + 2 L-methionine + 2 reduced [2Fe-2S]-[ferredoxin]. It functions in the pathway protein modification; protein lipoylation via endogenous pathway; protein N(6)-(lipoyl)lysine from octanoyl-[acyl-carrier-protein]: step 2/2. Functionally, catalyzes the radical-mediated insertion of two sulfur atoms into the C-6 and C-8 positions of the octanoyl moiety bound to the lipoyl domains of lipoate-dependent enzymes, thereby converting the octanoylated domains into lipoylated derivatives. The protein is Lipoyl synthase of Mycolicibacterium smegmatis (strain ATCC 700084 / mc(2)155) (Mycobacterium smegmatis).